The following is a 420-amino-acid chain: 3-phosphoshikimate 1-carboxyvinyltransferase (420 aa).

Positions 26, 27, and 31 each coordinate 3-phosphoshikimate. Residue lysine 26 participates in phosphoenolpyruvate binding. The phosphoenolpyruvate site is built by glycine 97 and arginine 125. Residues serine 170, serine 171, glutamine 172, aspartate 297, asparagine 320, and lysine 324 each contribute to the 3-phosphoshikimate site. Glutamine 172 is a phosphoenolpyruvate binding site. Catalysis depends on aspartate 297, which acts as the Proton acceptor. Phosphoenolpyruvate is bound by residues arginine 328, arginine 375, and lysine 400.

Belongs to the EPSP synthase family. Monomer.

The protein localises to the cytoplasm. It catalyses the reaction 3-phosphoshikimate + phosphoenolpyruvate = 5-O-(1-carboxyvinyl)-3-phosphoshikimate + phosphate. Its pathway is metabolic intermediate biosynthesis; chorismate biosynthesis; chorismate from D-erythrose 4-phosphate and phosphoenolpyruvate: step 6/7. Catalyzes the transfer of the enolpyruvyl moiety of phosphoenolpyruvate (PEP) to the 5-hydroxyl of shikimate-3-phosphate (S3P) to produce enolpyruvyl shikimate-3-phosphate and inorganic phosphate. This is 3-phosphoshikimate 1-carboxyvinyltransferase from Rhizobium etli (strain ATCC 51251 / DSM 11541 / JCM 21823 / NBRC 15573 / CFN 42).